Reading from the N-terminus, the 646-residue chain is Chaperone protein DnaK (646 aa).

Thr-197 carries the phosphothreonine; by autocatalysis modification. The tract at residues Gln-599–Lys-646 is disordered. Positions Ala-610–Lys-628 are enriched in polar residues. Residues Asp-633 to Lys-646 show a composition bias toward acidic residues.

This sequence belongs to the heat shock protein 70 family.

In terms of biological role, acts as a chaperone. The protein is Chaperone protein DnaK of Treponema denticola (strain ATCC 35405 / DSM 14222 / CIP 103919 / JCM 8153 / KCTC 15104).